We begin with the raw amino-acid sequence, 100 residues long: Small ribosomal subunit protein uS14c (100 aa).

The protein belongs to the universal ribosomal protein uS14 family. Part of the 30S ribosomal subunit.

Its subcellular location is the plastid. The protein resides in the chloroplast. Binds 16S rRNA, required for the assembly of 30S particles. This chain is Small ribosomal subunit protein uS14c, found in Angiopteris evecta (Mule's foot fern).